A 904-amino-acid polypeptide reads, in one-letter code: Alanine--tRNA ligase (904 aa).

His-594, His-598, Cys-695, and His-699 together coordinate Zn(2+).

This sequence belongs to the class-II aminoacyl-tRNA synthetase family. The cofactor is Zn(2+).

It localises to the cytoplasm. It catalyses the reaction tRNA(Ala) + L-alanine + ATP = L-alanyl-tRNA(Ala) + AMP + diphosphate. In terms of biological role, catalyzes the attachment of alanine to tRNA(Ala) in a two-step reaction: alanine is first activated by ATP to form Ala-AMP and then transferred to the acceptor end of tRNA(Ala). Also edits incorrectly charged Ser-tRNA(Ala) and Gly-tRNA(Ala) via its editing domain. The sequence is that of Alanine--tRNA ligase from Anaeromyxobacter sp. (strain Fw109-5).